A 604-amino-acid polypeptide reads, in one-letter code: MSEHDMQNTNPPLPPLPPEITQLLSGLDAAQWAWLSGYAWAKAGNGASAGLPALQTALPTAEPFSVTVLSASQTGNAKSVADKAADSLEAAGIQVSRAELKDYKAKNIAGERRLLLVTSTQGEGEPPEEAVVLHKLLNGKKAPKLDKLQFAVLGLGDSSYPNFCRAGKDFDKRFEELGAKRLLERVDADLDFAAAANAWTDNIAALLKEEAAKNRATPAPQATPPAGLQTASEGRYCKADPFPAALLANQKITARQSDKDVRHIEIDLSGSDLHYLPGDALGVWFDNDPALVREILDLLGIDPATEIQAGGKTLPVASALLSHFELTQNTPAFVKGYAPFADDDELDRIAADNAVLQGFVQSTPIADVLHRFPAKLTAEQFAGLLRPLAPRLYSISSSQAEVGDEVHLTVGAVRFEHEGRARVGGASGFLADRLEEDGTVRVFVERNDGFRLPEDSRKPIVMIGSGTGVAPFRAFVQQRAAENAEGKNWLIFGNPHFAADFLYQTEWQQFAKDGFLHRYDFAWSRDQEEKIYVQDKIREQAEGLWQWLQEGAHIYVCGDAAKMAKDVEAALLDVIIGAGHLDEEGAEEYLDMLREEKRYQRDVY.

Residues 66–204 (VTVLSASQTG…AANAWTDNIA (139 aa)) enclose the Flavodoxin-like domain. FMN contacts are provided by residues 72–77 (SQTGNA), 119–122 (STQG), and 155–164 (LGDSSYPNFC). An FAD-binding FR-type domain is found at 239-453 (ADPFPAALLA…VERNDGFRLP (215 aa)). FAD-binding positions include threonine 327, glutamine 361, 391–394 (RLYS), 409–411 (TVG), and 424–427 (GGAS). NADP(+)-binding positions include 524–525 (SR), 530–534 (KIYVQ), and aspartate 566. Residue tyrosine 604 participates in FAD binding.

It belongs to the NADPH-dependent sulphite reductase flavoprotein subunit CysJ family. In the N-terminal section; belongs to the flavodoxin family. This sequence in the C-terminal section; belongs to the flavoprotein pyridine nucleotide cytochrome reductase family. In terms of assembly, alpha(8)-beta(8). The alpha component is a flavoprotein, the beta component is a hemoprotein. Requires FAD as cofactor. FMN serves as cofactor.

The catalysed reaction is hydrogen sulfide + 3 NADP(+) + 3 H2O = sulfite + 3 NADPH + 4 H(+). The protein operates within sulfur metabolism; hydrogen sulfide biosynthesis; hydrogen sulfide from sulfite (NADPH route): step 1/1. In terms of biological role, component of the sulfite reductase complex that catalyzes the 6-electron reduction of sulfite to sulfide. This is one of several activities required for the biosynthesis of L-cysteine from sulfate. The flavoprotein component catalyzes the electron flow from NADPH -&gt; FAD -&gt; FMN to the hemoprotein component. The chain is Sulfite reductase [NADPH] flavoprotein alpha-component from Neisseria meningitidis serogroup C (strain 053442).